The sequence spans 100 residues: Urease subunit gamma (100 aa).

This sequence belongs to the urease gamma subunit family. As to quaternary structure, heterotrimer of UreA (gamma), UreB (beta) and UreC (alpha) subunits. Three heterotrimers associate to form the active enzyme. Post-translationally, although not discussed in the published references, Met-1 is represented in the submitted PDB entries as being modified by either a formyl, a carboxyl, or an acetyl group. The N-terminal is probably N-(dihydroxymethyl)methionine, the hydrated form of N-formylmethionine.

It localises to the cytoplasm. It carries out the reaction urea + 2 H2O + H(+) = hydrogencarbonate + 2 NH4(+). It functions in the pathway nitrogen metabolism; urea degradation; CO(2) and NH(3) from urea (urease route): step 1/1. The chain is Urease subunit gamma from Sporosarcina pasteurii (Bacillus pasteurii).